The primary structure comprises 306 residues: Tyrosine recombinase XerC (306 aa).

The Core-binding (CB) domain maps to 6–92; that stretch reads NTLYLQTKPY…ALRQWFSYLI (87 aa). Positions 113–292 constitute a Tyr recombinase domain; it reads RLPKNIDAEQ…DFQHLAKIYD (180 aa). Active-site residues include arginine 152, lysine 176, histidine 244, arginine 247, and histidine 270. Residue tyrosine 279 is the O-(3'-phospho-DNA)-tyrosine intermediate of the active site.

This sequence belongs to the 'phage' integrase family. XerC subfamily. In terms of assembly, forms a cyclic heterotetrameric complex composed of two molecules of XerC and two molecules of XerD.

It localises to the cytoplasm. Its function is as follows. Site-specific tyrosine recombinase, which acts by catalyzing the cutting and rejoining of the recombining DNA molecules. The XerC-XerD complex is essential to convert dimers of the bacterial chromosome into monomers to permit their segregation at cell division. It also contributes to the segregational stability of plasmids. This is Tyrosine recombinase XerC from Actinobacillus pleuropneumoniae serotype 7 (strain AP76).